The chain runs to 291 residues: uncharacterized protein (291 aa).

Solcar repeat units lie at residues 15–93, 104–190, and 201–287; these read PGPV…IKKS, PRTV…IKQS, and LSTV…VMEI. 6 helical membrane-spanning segments follow: residues 21–41, 70–90, 108–128, 169–189, 201–221, and 259–280; these read IIAGGVAGAIEISITYPAEFA, STVIVGNSLKAAVRFFAFDSI, LAGLGAGVAESVLVLTPFESI, TVARQAANSGVRFTAYNSIKQ, LSTVTTFLVGSVAGIITVYCT, and FWSGATPRLARLILSGGIVFTV.

This sequence belongs to the mitochondrial carrier (TC 2.A.29) family.

The protein resides in the mitochondrion inner membrane. This is an uncharacterized protein from Schizosaccharomyces pombe (strain 972 / ATCC 24843) (Fission yeast).